Consider the following 391-residue polypeptide: Elongation factor Tu (391 aa).

Residues 10 to 201 (KPHVNIGTIG…EVDNYIPTPE (192 aa)) form the tr-type G domain. The tract at residues 19–26 (GHVDHGKT) is G1. 19 to 26 (GHVDHGKT) is a GTP binding site. Residue T26 coordinates Mg(2+). Positions 55–59 (GITIS) are G2. A G3 region spans residues 76–79 (DCPG). Residues 76–80 (DCPGH) and 131–134 (NKVD) each bind GTP. The G4 stretch occupies residues 131–134 (NKVD). The interval 169-171 (SAL) is G5.

This sequence belongs to the TRAFAC class translation factor GTPase superfamily. Classic translation factor GTPase family. EF-Tu/EF-1A subfamily. As to quaternary structure, monomer.

It localises to the cytoplasm. The catalysed reaction is GTP + H2O = GDP + phosphate + H(+). In terms of biological role, GTP hydrolase that promotes the GTP-dependent binding of aminoacyl-tRNA to the A-site of ribosomes during protein biosynthesis. This is Elongation factor Tu from Bartonella henselae (strain ATCC 49882 / DSM 28221 / CCUG 30454 / Houston 1) (Rochalimaea henselae).